Consider the following 615-residue polypeptide: MVNFSVLPPEINSGRMFFGAGSGPMLAAAAAWDGLAAELGLAAESFGLVTSGLAGGSGQAWQGAAAAAMVVAAAPYAGWLAAAAARAGGAAVQAKAVAGAFEAARAAMVDPVVVAANRSAFVQLVLSNVFGQNAPAIAAAEATYEQMWAADVAAMVGYHGGASAAAAALAPWQQAVPGLSGLLGGAANAPAAAAQGAAQGLAELTLNLGVGNIGSLNLGSGNIGGTNVGSGNVGGTNLGSGNYGSLNWGSGNTGTGNAGSGNTGDYNPGSGNFGSGNFGSGNIGSLNVGSGNFGTLNLANGNNGDVNFGGGNTGDFNFGGGNNGTLNFGFGNTGSGNFGFGNTGNNNIGIGLTGDGQIGIGGLNSGTGNIGFGNSGNNNIGFFNSGDGNIGFFNSGDGNTGFGNAGNINTGFWNAGNLNTGFGSAGNGNVGIFDGGNSNSGSFNVGFQNTGFGNSGAGNTGFFNAGDSNTGFANAGNVNTGFFNGGDINTGGFNGGNVNTGFGSALTQAGANSGFGNLGTGNSGWGNSDPSGTGNSGFFNTGNGNSGFSNAGPAMLPGFNSGFANIGSFNAGIANSGNNLAGISNSGDDSSGAVNSGSQNSGAFNAGVGLSGFFR.

The protein belongs to the mycobacterial PPE family.

This is an uncharacterized protein from Mycobacterium tuberculosis (strain CDC 1551 / Oshkosh).